The chain runs to 123 residues: UPF0738 protein BCE_1319 (123 aa).

This sequence belongs to the UPF0738 family.

The sequence is that of UPF0738 protein BCE_1319 from Bacillus cereus (strain ATCC 10987 / NRS 248).